Here is a 137-residue protein sequence, read N- to C-terminus: MLQPKRTKFRKQMTGHNRGLAQRGSKVSFGEFALKSVARGRLTARQIESARRALTRHVKRGGKIWIRVFPDKPVTKKPLEVRMGKGKGGVEYWVAQIQPGKVLYEIEGVSEELAREAFALAAAKLPLATTFVKRTVM.

The protein belongs to the universal ribosomal protein uL16 family. As to quaternary structure, part of the 50S ribosomal subunit.

Binds 23S rRNA and is also seen to make contacts with the A and possibly P site tRNAs. In Ectopseudomonas mendocina (strain ymp) (Pseudomonas mendocina), this protein is Large ribosomal subunit protein uL16.